Here is a 304-residue protein sequence, read N- to C-terminus: Ribonuclease Z (304 aa).

Residues H64, H66, D68, H69, H141, D209, and H267 each contribute to the Zn(2+) site. D68 serves as the catalytic Proton acceptor.

The protein belongs to the RNase Z family. Homodimer. Requires Zn(2+) as cofactor.

The enzyme catalyses Endonucleolytic cleavage of RNA, removing extra 3' nucleotides from tRNA precursor, generating 3' termini of tRNAs. A 3'-hydroxy group is left at the tRNA terminus and a 5'-phosphoryl group is left at the trailer molecule.. Zinc phosphodiesterase, which displays some tRNA 3'-processing endonuclease activity. Probably involved in tRNA maturation, by removing a 3'-trailer from precursor tRNA. In Thermoplasma volcanium (strain ATCC 51530 / DSM 4299 / JCM 9571 / NBRC 15438 / GSS1), this protein is Ribonuclease Z.